The sequence spans 328 residues: tRNA uridine(34) hydroxylase (328 aa).

A Rhodanese domain is found at 130 to 224 (LDKDTVVLDT…YGKDPEVQGE (95 aa)). Cys184 functions as the Cysteine persulfide intermediate in the catalytic mechanism.

Belongs to the TrhO family.

It carries out the reaction uridine(34) in tRNA + AH2 + O2 = 5-hydroxyuridine(34) in tRNA + A + H2O. Catalyzes oxygen-dependent 5-hydroxyuridine (ho5U) modification at position 34 in tRNAs. The polypeptide is tRNA uridine(34) hydroxylase (Streptococcus pneumoniae (strain P1031)).